A 188-amino-acid chain; its full sequence is Cytochrome b-245 chaperone 1 homolog (188 aa).

Residues 20 to 42 (SIRSWSLLVGILSVGLAAAYYST) form a helical membrane-spanning segment.

This sequence belongs to the CYBC1 family.

The protein localises to the endoplasmic reticulum membrane. In terms of biological role, functions as a chaperone necessary for a stable expression of the CYBA and CYBB subunits of the cytochrome b-245 heterodimer. This is Cytochrome b-245 chaperone 1 homolog (cybc1) from Xenopus laevis (African clawed frog).